Here is an 89-residue protein sequence, read N- to C-terminus: Small ribosomal subunit protein uS15 (89 aa).

The protein belongs to the universal ribosomal protein uS15 family. As to quaternary structure, part of the 30S ribosomal subunit. Forms a bridge to the 50S subunit in the 70S ribosome, contacting the 23S rRNA.

One of the primary rRNA binding proteins, it binds directly to 16S rRNA where it helps nucleate assembly of the platform of the 30S subunit by binding and bridging several RNA helices of the 16S rRNA. Its function is as follows. Forms an intersubunit bridge (bridge B4) with the 23S rRNA of the 50S subunit in the ribosome. The polypeptide is Small ribosomal subunit protein uS15 (Acidothermus cellulolyticus (strain ATCC 43068 / DSM 8971 / 11B)).